The primary structure comprises 210 residues: Outer-membrane lipoprotein LolB (210 aa).

An N-terminal signal peptide occupies residues 1–18; sequence MKKLTKLLSLTLLFALAG. Cys-19 carries N-palmitoyl cysteine lipidation. Cys-19 carries S-diacylglycerol cysteine lipidation.

This sequence belongs to the LolB family. As to quaternary structure, monomer.

Its subcellular location is the cell outer membrane. Plays a critical role in the incorporation of lipoproteins in the outer membrane after they are released by the LolA protein. The polypeptide is Outer-membrane lipoprotein LolB (Glaesserella parasuis serovar 5 (strain SH0165) (Haemophilus parasuis)).